The primary structure comprises 856 residues: Structure-specific endonuclease subunit SLX4 (856 aa).

Over residues 1–19 the composition is skewed to polar residues; it reads MDNAAIASQSNTPPSNGRS. Disordered regions lie at residues 1–24, 38–65, 88–121, 139–202, 296–326, 362–392, 621–640, 668–689, and 715–742; these read MDNAAIASQSNTPPSNGRSSARFV, VIEPSSPFSPPSPSTLLTSLSKSPSHKI, VDSPKRQDKSITGSKAKPASTMRHGQRTASHKMA, KTRK…DNEL, GIQTPTESRPATNDSQSISSKQQRVKVKKPQ, KKMGVTKRTSGTERANAARGKSDTLKNGNGP, SKSSKLEPKPNQRNHKSQGD, RLAKTSVKSQEPKSFSLSNEGP, and DSVGEALPLSPSHSSNGNGTLHHPQDCD. Residues 51 to 60 show a composition bias toward low complexity; sequence STLLTSLSKS. Positions 139–152 are enriched in basic residues; sequence KTRKKKAATAKRTR. Polar residues predominate over residues 296–309; sequence GIQTPTESRPATND. The segment covering 673 to 686 has biased composition (polar residues); sequence SVKSQEPKSFSLSN.

Belongs to the SLX4 family. In terms of assembly, forms a heterodimer with SLX1. Post-translationally, phosphorylated in response to DNA damage.

The protein resides in the nucleus. Regulatory subunit of the SLX1-SLX4 structure-specific endonuclease that resolves DNA secondary structures generated during DNA repair and recombination. Has endonuclease activity towards branched DNA substrates, introducing single-strand cuts in duplex DNA close to junctions with ss-DNA. This chain is Structure-specific endonuclease subunit SLX4, found in Blastomyces gilchristii (strain SLH14081) (Blastomyces dermatitidis).